The chain runs to 251 residues: Probable inactive cytidine deaminase 4 (251 aa).

61–63 (NVE) contributes to the substrate binding site. E76 serves as the catalytic Proton donor. One can recognise a CMP/dCMP-type deaminase domain in the interval 136–251 (EHCSHLKCRA…VFRCHKTAEN (116 aa)).

The protein belongs to the cytidine and deoxycytidylate deaminase family. Homodimer.

This Arabidopsis thaliana (Mouse-ear cress) protein is Probable inactive cytidine deaminase 4 (CDA4).